The sequence spans 95 residues: Putative pterin-4-alpha-carbinolamine dehydratase (95 aa).

The protein belongs to the pterin-4-alpha-carbinolamine dehydratase family.

It catalyses the reaction (4aS,6R)-4a-hydroxy-L-erythro-5,6,7,8-tetrahydrobiopterin = (6R)-L-erythro-6,7-dihydrobiopterin + H2O. This chain is Putative pterin-4-alpha-carbinolamine dehydratase, found in Thermosynechococcus vestitus (strain NIES-2133 / IAM M-273 / BP-1).